Consider the following 656-residue polypeptide: MAMARLTPNGVAAALAGDTNLKPVLQIVELRGVQVNGAGVTRGERFRAVVSDGTAASSALFAAQLSDHARSGALRRGSIVQLSEYVINEVGPRRIIVILNLEVLVSECEIIGNPTALSETGSPIPNPTRVEQFNGAPQYGLMAGNSSNTTTKPSDNVPLFQNSMAGNSSNFATRPSDKVPVFQPTVQPSYRPAPNYKNHGAIMKNEAPARIIPISALNPYQGRWAIKARVTAKGDIRRYHNAKGDGKVFSFDLLDSDGGEIRVTCFNALLDRFYEVVEVGKVYVVSRGNLRPAQKNYNHLNNEWEILLENGSTVDLCPDENSSIPTQRFDFRPINEIEDAQNNAILDIIGVVTSVNPCTTIQRKNGMETQKRTMNLKDMSGRSVEVTMWGDFCNREGSQLQGMVERGIFPVLAVKAGKVSDFSGKSVGTISSTQLFINPDSAEAHSLRQWFDSGGRDASTQSISRDITPGASRNEIRKTVAQIKDEGLGMGDKPDWITVKATVIFFKNESFFYTACPNMIGDRQCNKKVTKSTNGNWTCDKCDREFEECDYRYLLQFQIQDHSGTAWVTAFQEAGQELLGCSATELNALKEREDPRFADTMLNCLFQEYLLRLKVKEESYGDERKVKNTAVKVEKVDPSGESKFLLDLISKSSALH.

Residues 225–307 (AIKARVTAKG…NHLNNEWEIL (83 aa)) constitute a DNA-binding region (OB). The C4-type zinc-finger motif lies at 516–542 (CPNMIGDRQCNKKVTKSTNGNWTCDKC).

The protein belongs to the replication factor A protein 1 family. As to quaternary structure, heterotrimer of RPA1, RPA2 and RPA3 (canonical replication protein A complex). Interacts with RPA2B. As to expression, expressed in root tips, roots, shoot apical meristem (SAM), young leaves, flag leaves and ears, and at lower levels in mature leaves.

It localises to the nucleus. Its function is as follows. Component of the replication protein A complex (RPA) required for DNA recombination, repair and replication. The activity of RPA is mediated by single-stranded DNA binding and protein interactions. Plays an essential role in meiotic and somatic DNA repair, but is dispensable for DNA replication and homologous recombination. Is essential for normal progression through meiosis in pollen mother cells. Is involved in repair of double-strand DNA breaks (DSBs) induced by genotoxic stresses. The sequence is that of Replication protein A 70 kDa DNA-binding subunit A (RPA1A) from Oryza sativa subsp. japonica (Rice).